Reading from the N-terminus, the 192-residue chain is uncharacterized protein (192 aa).

In terms of domain architecture, Nudix hydrolase spans 29–160 (HRQAAVLIPI…PLDIYRRGDS (132 aa)). A Nudix box motif is present at residues 67-89 (GAVDDTDASVIAAALREAEEEVA). 2 residues coordinate Mg(2+): glutamate 83 and glutamate 87.

It belongs to the Nudix hydrolase family. PCD1 subfamily. It depends on Mn(2+) as a cofactor. Mg(2+) is required as a cofactor.

Functionally, probably mediates the hydrolysis of some nucleoside diphosphate derivatives. This is an uncharacterized protein from Shigella flexneri serotype 5b (strain 8401).